Consider the following 79-residue polypeptide: Acyl carrier protein (79 aa).

Positions 2–77 (SEVAEKVKKI…DAIDYIEKKK (76 aa)) constitute a Carrier domain. Serine 37 is subject to O-(pantetheine 4'-phosphoryl)serine.

It belongs to the acyl carrier protein (ACP) family. Post-translationally, 4'-phosphopantetheine is transferred from CoA to a specific serine of apo-ACP by AcpS. This modification is essential for activity because fatty acids are bound in thioester linkage to the sulfhydryl of the prosthetic group.

The protein resides in the cytoplasm. It participates in lipid metabolism; fatty acid biosynthesis. Its function is as follows. Carrier of the growing fatty acid chain in fatty acid biosynthesis. This Acidiphilium cryptum (strain JF-5) protein is Acyl carrier protein.